The following is a 332-amino-acid chain: Terpene synthase 1 (332 aa).

The short motif at 81 to 86 is the DDxx(x)D/E motif element; sequence DDGLDA. Positions 221 to 229 match the NDxxSxxxD/E motif motif; the sequence is NDLVSYEKE.

This sequence belongs to the terpene synthase family.

The catalysed reaction is (2E,6E)-farnesyl diphosphate = (2S,3R,6S,9S)-(-)-protoillud-7-ene + diphosphate. Its function is as follows. Terpene synthase that converts its substrate farnesyl diphosphate (FPP) into the sesquiterpene protoillud-7-ene. The polypeptide is Terpene synthase 1 (Acytostelium subglobosum (Slime mold)).